The following is a 338-amino-acid chain: Methionine import ATP-binding protein MetN 1 (338 aa).

Positions 2 to 241 (IEVRSVTKRF…PHSELGVGLL (240 aa)) constitute an ABC transporter domain. 38-45 (GQSGAGKT) provides a ligand contact to ATP.

It belongs to the ABC transporter superfamily. Methionine importer (TC 3.A.1.24) family. The complex is composed of two ATP-binding proteins (MetN), two transmembrane proteins (MetI) and a solute-binding protein (MetQ).

Its subcellular location is the cell membrane. It catalyses the reaction L-methionine(out) + ATP + H2O = L-methionine(in) + ADP + phosphate + H(+). It carries out the reaction D-methionine(out) + ATP + H2O = D-methionine(in) + ADP + phosphate + H(+). Its function is as follows. Part of the ABC transporter complex MetNIQ involved in methionine import. Responsible for energy coupling to the transport system. This chain is Methionine import ATP-binding protein MetN 1, found in Rhodococcus jostii (strain RHA1).